A 126-amino-acid polypeptide reads, in one-letter code: UPF0235 protein C15orf40 homolog (126 aa).

Residues M1–K33 form a disordered region. S89 is subject to Phosphoserine.

Belongs to the UPF0235 family.

This Rattus norvegicus (Rat) protein is UPF0235 protein C15orf40 homolog.